A 153-amino-acid chain; its full sequence is 6,7-dimethyl-8-ribityllumazine synthase 1 (153 aa).

5-amino-6-(D-ribitylamino)uracil contacts are provided by residues phenylalanine 16, 47–49 (ALE), and 76–78 (MVI). Position 81-82 (81-82 (ET)) interacts with (2S)-2-hydroxy-3-oxobutyl phosphate. The active-site Proton donor is the histidine 84. Asparagine 109 lines the 5-amino-6-(D-ribitylamino)uracil pocket. Arginine 123 lines the (2S)-2-hydroxy-3-oxobutyl phosphate pocket.

The protein belongs to the DMRL synthase family.

It carries out the reaction (2S)-2-hydroxy-3-oxobutyl phosphate + 5-amino-6-(D-ribitylamino)uracil = 6,7-dimethyl-8-(1-D-ribityl)lumazine + phosphate + 2 H2O + H(+). Its pathway is cofactor biosynthesis; riboflavin biosynthesis; riboflavin from 2-hydroxy-3-oxobutyl phosphate and 5-amino-6-(D-ribitylamino)uracil: step 1/2. In terms of biological role, catalyzes the formation of 6,7-dimethyl-8-ribityllumazine by condensation of 5-amino-6-(D-ribitylamino)uracil with 3,4-dihydroxy-2-butanone 4-phosphate. This is the penultimate step in the biosynthesis of riboflavin. The chain is 6,7-dimethyl-8-ribityllumazine synthase 1 from Rhizobium meliloti (strain 1021) (Ensifer meliloti).